Consider the following 566-residue polypeptide: MPPQVARNLLRAARARAVFQSTRPAHRRPAAISCRFQSTEAVRQTPSDVYQAPPRGFVPRKEEKFVPTQSRKAAPAATLKLNSKNLSSLQNVSVPTYKRHGVKQGIVHVGVGGFHRAHLAAYVDTLLEQFNVQDWSICGVDLQPFAAPMRDALKPQDNLYTMIERAADGTSARVIGSITDYLFAPDSAEAVIAKMAHPDTHIVSMTVTESGYYMNENTHELQIDHPDVAADLAGEQPARTVFGYLYAAMARRHAAGLRPFTVLSCDNMQKNGDISRNMLVSFARHAGNNEVADWIASNGAFPNSMVDRITPRTNDEDKVSLAKNFGVEDAWPVVTEPFHQWVLEDKFVDGRPPFEKAGVQIVPDVHQVEEYEMIKLRLLNGSHSAMGYAGQLAGFTYIHEVISHPVYRQFVINMMQQEVKPLLPQIPGVSVDDYCNTLLGRFSNPTLKDELPRICLGGSGKIPQFIMPSIAEQIIAGGPLRRLTLVAAAWFRYNKGIDDAGNAFKVDDPMVEELQAKAAEGPIAQLQIKNLFGDDLRQDKRFVQELKTALEGLEREGALAMIEKYA.

106–117 (IVHVGVGGFHRA) contacts NAD(+).

The protein belongs to the mannitol dehydrogenase family. In terms of assembly, monomer.

It carries out the reaction D-mannitol + NAD(+) = D-fructose + NADH + H(+). Its function is as follows. Catalyzes the NAD(H)-dependent interconversion of D-fructose and D-mannitol in the mannitol metabolic pathway. The protein is Mannitol 2-dehydrogenase of Pyrenophora tritici-repentis (strain Pt-1C-BFP) (Wheat tan spot fungus).